We begin with the raw amino-acid sequence, 143 residues long: Small ribosomal subunit protein bS18 (143 aa).

Residues 1 to 72 (MARPDMGGPK…RGGEEGGRRG (72 aa)) are disordered. Over residues 10 to 50 (KSSGGFGGPRSGGGFGGGGYGGGGGGGGGYGGGGGGGFGGR) the composition is skewed to gly residues. The span at 51 to 70 (GGDRGDRGDRDDRGGEEGGR) shows a compositional bias: basic and acidic residues.

It belongs to the bacterial ribosomal protein bS18 family. In terms of assembly, part of the 30S ribosomal subunit. Forms a tight heterodimer with protein bS6.

Binds as a heterodimer with protein bS6 to the central domain of the 16S rRNA, where it helps stabilize the platform of the 30S subunit. This Anaeromyxobacter sp. (strain Fw109-5) protein is Small ribosomal subunit protein bS18.